We begin with the raw amino-acid sequence, 192 residues long: Casparian strip membrane protein 4 (192 aa).

The Cytoplasmic portion of the chain corresponds to 1 to 29; sequence MTKDVVIEHGESSKAPLVPAPVAAGVGRA. The chain crosses the membrane as a helical span at residues 30-50; it reads VSIADVFLRFLSIVATIASAI. The Extracellular segment spans residues 51–79; sequence SMGTTNETLPFFTQFIQFEAKYSDLPSFT. Asn56 is a glycosylation site (N-linked (GlcNAc...) asparagine). Residues 80–100 traverse the membrane as a helical segment; sequence FFVAANAVVCTYLVLSIPLSI. The Cytoplasmic segment spans residues 101 to 112; it reads VHIIRPRARYSR. A helical transmembrane segment spans residues 113–133; that stretch reads LILVFFDAVMLALLTAGASAA. The Extracellular portion of the chain corresponds to 134 to 166; that stretch reads AAIVYLAHKGNVRANWFAICQQFDSFCERISGS. Residues 167–187 traverse the membrane as a helical segment; that stretch reads LIGSFAAMVLLIVLIFLSAFA. Topologically, residues 188–192 are cytoplasmic; the sequence is LARRH.

It belongs to the Casparian strip membrane proteins (CASP) family. Homodimer and heterodimers.

It localises to the cell membrane. Regulates membrane-cell wall junctions and localized cell wall deposition. Required for establishment of the Casparian strip membrane domain (CSD) and the subsequent formation of Casparian strips, a cell wall modification of the root endodermis that determines an apoplastic barrier between the intraorganismal apoplasm and the extraorganismal apoplasm and prevents lateral diffusion. In Sorghum bicolor (Sorghum), this protein is Casparian strip membrane protein 4.